The chain runs to 365 residues: Cobalt-precorrin-5B C(1)-methyltransferase (365 aa).

It belongs to the CbiD family.

It catalyses the reaction Co-precorrin-5B + S-adenosyl-L-methionine = Co-precorrin-6A + S-adenosyl-L-homocysteine. It functions in the pathway cofactor biosynthesis; adenosylcobalamin biosynthesis; cob(II)yrinate a,c-diamide from sirohydrochlorin (anaerobic route): step 6/10. Functionally, catalyzes the methylation of C-1 in cobalt-precorrin-5B to form cobalt-precorrin-6A. The polypeptide is Cobalt-precorrin-5B C(1)-methyltransferase (Clostridium perfringens (strain 13 / Type A)).